A 128-amino-acid chain; its full sequence is Large ribosomal subunit protein bL17 (128 aa).

This sequence belongs to the bacterial ribosomal protein bL17 family. As to quaternary structure, part of the 50S ribosomal subunit. Contacts protein L32.

The protein is Large ribosomal subunit protein bL17 of Streptococcus pyogenes serotype M49 (strain NZ131).